A 54-amino-acid chain; its full sequence is Apelin receptor early endogenous ligand (54 aa).

Positions 1–23 are cleaved as a signal peptide; the sequence is MRFQPLFWVFFIFAMSLLFISEQ.

This sequence belongs to the Elabela/Toddler family. As to quaternary structure, interacts with APLNR. As to expression, expressed in the placenta. Expressed in syncytiotrophoblasts of the placenta labyrinth at 10.5 dpc. Expressed in placental chorionic trophoblasts (at protein level). Expressed in a small population of epiblast cells in the distal half of the embryo at 7 dpc. Expressed in newly formed definitive endoderm cells in the proximal half of the embryo, while it is not present in extra-embryonic endoderm at 7.5 dpc. This expression pattern then changes to the ventral aspect of the developing foregut pocket and the entire hindgut pocket at 8.5 dpc, before becoming restricted to the foregut overlying the heart and the posterior-most hindgut. Not detected in endothelial precursor cells of the yolk sac at 8 dpc. Expressed in extraembryonic tissues as well as in the chorion at 8.25 dpc. Expressed in endometrial stroma of the uterus of pregnant mice at 8.5 dpc. Expressed in the developing heart, caudal neural tube and trophobasts at 9 dpc. Expressed in the chorionic plate of the chorioallantoic placenta at 9 dpc. Expressed in the posterior half of the ventral neural tube at 9.25 dpc. Expressed in trophoblast cells at the periphery of the placenta at 9.5 dpc. Expressed in collecting ducts of the kidney of pregnant mice at 10.5 dpc. Expressed in the epicardium of the developing heart at 11.5 dpc. Expressed weakly in the adult heart. Expressed in endothelial cells and fibroblasts and weakly in cardiomyocytes.

The protein localises to the secreted. It is found in the extracellular space. Its function is as follows. Peptide hormone that functions as endogenous ligand for the G-protein-coupled apelin receptor (APLNR/APJ), that plays a role in the regulation of normal cardiovascular function and fluid homeostasis. Functions as a balanced agonist activating both G(i) protein pathway and beta-arrestin pathway of APLNR. Downstream G proteins activation, apelin can inhibit cAMP production and activate key intracellular effectors such as ERKs. On the other hand, APLNR activation induces beta-arrestin recruitment to the membrane leading to desensitization and internalization of the receptor. Required for mesendodermal differentiation, blood vessels formation and heart morphogenesis during early development and for adult cardiovascular homeostasis. Acts as a motogen by promoting mesendodermal cell migration during gastrulation by binding and activating APLNR. Acts as an early embryonic regulator of cellular movement with a role in migration and development of cardiac progenitor cells. May act as a chemoattractant for the activation of angioblast migration toward the embryonic midline, i.e. the position of the future vessel formation, during vasculogenesis. Positively regulates sinus venosus (SV)-derived endothelial cells migration into the developing heart to promote coronary blood vessel sprouting. Plays a role in placental vascular development; promotes placental trophoblast invasion and spiral artery remodeling in the uterus. Involved in the regulation of maternal cardiovascular homeostasis to prevent gestational hypertension and for potent cardioprotective functions during heart failure. Mediates myocardial contractility in an ERK1/2-dependent manner. This is Apelin receptor early endogenous ligand from Mus musculus (Mouse).